The primary structure comprises 833 residues: Protein translocase subunit SecA (833 aa).

ATP is bound by residues Gln87, 105–109 (GEGKT), and Asp494. Residues 789–816 (PAAVAYSGGEAEAGPAQPHREDPKVGRN) form a disordered region. Positions 806–815 (PHREDPKVGR) are enriched in basic and acidic residues. Residues Cys819, Cys821, Cys830, and Cys831 each contribute to the Zn(2+) site.

This sequence belongs to the SecA family. Monomer and homodimer. Part of the essential Sec protein translocation apparatus which comprises SecA, SecYEG and auxiliary proteins SecDF-YajC and YidC. The cofactor is Zn(2+).

It is found in the cell inner membrane. It localises to the cytoplasm. It carries out the reaction ATP + H2O + cellular proteinSide 1 = ADP + phosphate + cellular proteinSide 2.. Functionally, part of the Sec protein translocase complex. Interacts with the SecYEG preprotein conducting channel. Has a central role in coupling the hydrolysis of ATP to the transfer of proteins into and across the cell membrane, serving as an ATP-driven molecular motor driving the stepwise translocation of polypeptide chains across the membrane. This Nitratidesulfovibrio vulgaris (strain DP4) (Desulfovibrio vulgaris) protein is Protein translocase subunit SecA.